The sequence spans 50 residues: Sperm protamine P1 (50 aa).

2 cysteine pairs are disulfide-bonded: Cys-7–Cys-15 and Cys-39–Cys-47.

Belongs to the protamine P1 family. Cross-linked by interchain disulfide bonds around the DNA-helix. In terms of tissue distribution, testis.

Its subcellular location is the nucleus. The protein localises to the chromosome. Protamines substitute for histones in the chromatin of sperm during the haploid phase of spermatogenesis. They compact sperm DNA into a highly condensed, stable and inactive complex. The chain is Sperm protamine P1 (PRM1) from Sus scrofa (Pig).